The primary structure comprises 185 residues: Anaphase-promoting complex subunit 10 (185 aa).

Residue T2 is modified to N-acetylthreonine. In terms of domain architecture, DOC spans 2–185 (TTPNKTPPGA…IDFMMYRSIR (184 aa)). At K169 the chain carries N6-acetyllysine.

Belongs to the APC10 family. The mammalian APC/C is composed at least of 14 distinct subunits ANAPC1, ANAPC2, CDC27/APC3, ANAPC4, ANAPC5, CDC16/APC6, ANAPC7, CDC23/APC8, ANAPC10, ANAPC11, CDC26/APC12, ANAPC13, ANAPC15 and ANAPC16 that assemble into a complex of at least 19 chains with a combined molecular mass of around 1.2 MDa; APC/C interacts with FZR1 and FBXO5. The C-terminus of APC10 binds to CDC27/APC3. Interacts with PIWIL1; interaction only takes place when PIWIL1 binds piRNA. Interacts with FBXO43; the interaction is direct.

It participates in protein modification; protein ubiquitination. In terms of biological role, component of the anaphase promoting complex/cyclosome (APC/C), a cell cycle-regulated E3 ubiquitin ligase that controls progression through mitosis and the G1 phase of the cell cycle. The APC/C complex acts by mediating ubiquitination and subsequent degradation of target proteins: it mainly mediates the formation of 'Lys-11'-linked polyubiquitin chains and, to a lower extent, the formation of 'Lys-48'- and 'Lys-63'-linked polyubiquitin chains. The APC/C complex catalyzes assembly of branched 'Lys-11'-/'Lys-48'-linked branched ubiquitin chains on target proteins. This is Anaphase-promoting complex subunit 10 (ANAPC10) from Bos taurus (Bovine).